We begin with the raw amino-acid sequence, 202 residues long: Imidazoleglycerol-phosphate dehydratase (202 aa).

Belongs to the imidazoleglycerol-phosphate dehydratase family.

It is found in the cytoplasm. It catalyses the reaction D-erythro-1-(imidazol-4-yl)glycerol 3-phosphate = 3-(imidazol-4-yl)-2-oxopropyl phosphate + H2O. It functions in the pathway amino-acid biosynthesis; L-histidine biosynthesis; L-histidine from 5-phospho-alpha-D-ribose 1-diphosphate: step 6/9. This chain is Imidazoleglycerol-phosphate dehydratase, found in Acinetobacter baumannii (strain AYE).